A 151-amino-acid polypeptide reads, in one-letter code: Metalloproteinase inhibitor 3 (151 aa).

An NTR domain is found at 1 to 108 (CNSDIVIRAK…GLNYRYHLGC (108 aa)). 3 disulfides stabilise this stretch: Cys1/Cys108, Cys115/Cys120, and Cys128/Cys149. The interval 53-54 (ES) is involved in metalloproteinase-binding. The mediates interaction with EFEMP1 stretch occupies residues 71–151 (GRVYDGKVYT…YQSKHYACIR (81 aa)).

The protein belongs to the protease inhibitor I35 (TIMP) family. In terms of assembly, interacts with EFEMP1.

The protein resides in the secreted. The protein localises to the extracellular space. Its subcellular location is the extracellular matrix. Its function is as follows. Complexes with metalloproteinases (such as collagenases) and irreversibly inactivates them by binding to their catalytic zinc cofactor. May form part of a tissue-specific acute response to remodeling stimuli. This Oryctolagus cuniculus (Rabbit) protein is Metalloproteinase inhibitor 3 (TIMP3).